We begin with the raw amino-acid sequence, 298 residues long: MTDATTISPLDQARILSEALPHMQEYDDETIVIKYGGHAMGDEDTAKAFARDIVLLEQTAINPVVVHGGGPQIATMLKRLGIVSEFAAGLRITDAATIEIVEMVLAGSINKQLVGYINEAGGKAVGLCGKDGNMVRAVKATRTMVDPDSHIEKVVDLGFVGEPDKVDLTLLNQLIGYELIPVLAPLATSKEGQTFNVNADTFAGAVAGALKAKRLLLLTDVPGVLDKSKKLIPEISIKDARKLIADGTISGGMIPKVETCIYALEQGVQGVVILDGKVPHAVLLELFTNQGTGTLIHK.

Substrate-binding positions include 69–70 (GG), Arg91, and Asn196.

The protein belongs to the acetylglutamate kinase family. ArgB subfamily.

The protein resides in the cytoplasm. The enzyme catalyses N-acetyl-L-glutamate + ATP = N-acetyl-L-glutamyl 5-phosphate + ADP. It functions in the pathway amino-acid biosynthesis; L-arginine biosynthesis; N(2)-acetyl-L-ornithine from L-glutamate: step 2/4. Its function is as follows. Catalyzes the ATP-dependent phosphorylation of N-acetyl-L-glutamate. The chain is Acetylglutamate kinase from Bradyrhizobium sp. (strain ORS 278).